Here is a 515-residue protein sequence, read N- to C-terminus: Signal transduction histidine-protein kinase/phosphatase MprB (515 aa).

The Cytoplasmic portion of the chain corresponds to M1–R24. Residues V25–Y45 traverse the membrane as a helical segment. Residues A46–T165 lie on the Extracellular side of the membrane. The helical transmembrane segment at V166 to A186 threads the bilayer. The region spanning R187–E239 is the HAMP domain. Over R187 to L515 the chain is Cytoplasmic. A Histidine kinase domain is found at D247 to P467. The residue at position 250 (H250) is a Phosphohistidine; by autocatalysis. The segment at L468 to L515 is disordered.

The cofactor is Mg(2+). Mn(2+) serves as cofactor. Autophosphorylated.

It localises to the cell membrane. It catalyses the reaction ATP + protein L-histidine = ADP + protein N-phospho-L-histidine.. Member of the two-component regulatory system MprB/MprA which contributes to maintaining a balance among several systems involved in stress resistance and is required for establishment and maintenance of persistent infection in the host. In response to environmental signals MprB acts both as a membrane-associated protein kinase that undergoes autophosphorylation and subsequently transfers the phosphate to MprA, and a protein phosphatase that dephosphorylates phospho-MprA. This Mycobacterium sp. (strain JLS) protein is Signal transduction histidine-protein kinase/phosphatase MprB (mprB).